Here is a 94-residue protein sequence, read N- to C-terminus: Phosphoribosyl-ATP pyrophosphatase (94 aa).

This sequence belongs to the PRA-PH family.

It is found in the cytoplasm. It carries out the reaction 1-(5-phospho-beta-D-ribosyl)-ATP + H2O = 1-(5-phospho-beta-D-ribosyl)-5'-AMP + diphosphate + H(+). It functions in the pathway amino-acid biosynthesis; L-histidine biosynthesis; L-histidine from 5-phospho-alpha-D-ribose 1-diphosphate: step 2/9. The polypeptide is Phosphoribosyl-ATP pyrophosphatase (Pyrobaculum calidifontis (strain DSM 21063 / JCM 11548 / VA1)).